Here is a 690-residue protein sequence, read N- to C-terminus: Elongation factor G (690 aa).

One can recognise a tr-type G domain in the interval 8-283; it reads EKYRNIGIMA…AVVDYLPSPL (276 aa). GTP contacts are provided by residues 17 to 24, 81 to 85, and 135 to 138; these read AHIDAGKT, DTPGH, and NKLD.

This sequence belongs to the TRAFAC class translation factor GTPase superfamily. Classic translation factor GTPase family. EF-G/EF-2 subfamily.

Its subcellular location is the cytoplasm. Its function is as follows. Catalyzes the GTP-dependent ribosomal translocation step during translation elongation. During this step, the ribosome changes from the pre-translocational (PRE) to the post-translocational (POST) state as the newly formed A-site-bound peptidyl-tRNA and P-site-bound deacylated tRNA move to the P and E sites, respectively. Catalyzes the coordinated movement of the two tRNA molecules, the mRNA and conformational changes in the ribosome. The polypeptide is Elongation factor G (Rhizorhabdus wittichii (strain DSM 6014 / CCUG 31198 / JCM 15750 / NBRC 105917 / EY 4224 / RW1) (Sphingomonas wittichii)).